The sequence spans 189 residues: Elongation factor P (189 aa).

Lys34 is modified (N6-(3,6-diaminohexanoyl)-5-hydroxylysine).

It belongs to the elongation factor P family. May be beta-lysylated on the epsilon-amino group of Lys-34 by the combined action of EpmA and EpmB, and then hydroxylated on the C5 position of the same residue by EpmC (if this protein is present). Lysylation is critical for the stimulatory effect of EF-P on peptide-bond formation. The lysylation moiety may extend toward the peptidyltransferase center and stabilize the terminal 3-CCA end of the tRNA. Hydroxylation of the C5 position on Lys-34 may allow additional potential stabilizing hydrogen-bond interactions with the P-tRNA.

It is found in the cytoplasm. Its pathway is protein biosynthesis; polypeptide chain elongation. Involved in peptide bond synthesis. Alleviates ribosome stalling that occurs when 3 or more consecutive Pro residues or the sequence PPG is present in a protein, possibly by augmenting the peptidyl transferase activity of the ribosome. Modification of Lys-34 is required for alleviation. The sequence is that of Elongation factor P from Legionella pneumophila (strain Lens).